The following is a 123-amino-acid chain: uncharacterized protein (123 aa).

Positions 31–57 are enriched in basic and acidic residues; that stretch reads KLRTEAKKSKDKERTKEKEKHESLAKE. Residues 31–58 form a disordered region; that stretch reads KLRTEAKKSKDKERTKEKEKHESLAKEK. The chain crosses the membrane as a helical span at residues 91 to 111; it reads IIIFLLILLVSGLMVGIFFGI.

It is found in the membrane. This is an uncharacterized protein from Mycoplasma genitalium (strain ATCC 33530 / DSM 19775 / NCTC 10195 / G37) (Mycoplasmoides genitalium).